Reading from the N-terminus, the 142-residue chain is Large ribosomal subunit protein uL13 (142 aa).

The protein belongs to the universal ribosomal protein uL13 family. As to quaternary structure, part of the 50S ribosomal subunit.

Functionally, this protein is one of the early assembly proteins of the 50S ribosomal subunit, although it is not seen to bind rRNA by itself. It is important during the early stages of 50S assembly. This is Large ribosomal subunit protein uL13 from Ruthia magnifica subsp. Calyptogena magnifica.